The chain runs to 361 residues: DNA double-strand break repair protein Mre11 (361 aa).

Residues Asp7, His9, Asp48, and Asn83 each coordinate Mn(2+). The active-site Proton donor is His84. Residues His176, His204, and His206 each coordinate Mn(2+).

This sequence belongs to the MRE11/RAD32 family. In terms of assembly, homodimer. Forms a heterotetramer composed of two Mre11 subunits and two Rad50 subunits. The cofactor is Mn(2+).

With respect to regulation, nuclease activity is regulated by Rad50. Its function is as follows. Part of the Rad50/Mre11 complex, which is involved in the early steps of DNA double-strand break (DSB) repair. The complex may facilitate opening of the processed DNA ends to aid in the recruitment of HerA and NurA. Mre11 binds to DSB ends and has both double-stranded 3'-5' exonuclease activity and single-stranded endonuclease activity. This Nanoarchaeum equitans (strain Kin4-M) protein is DNA double-strand break repair protein Mre11.